A 155-amino-acid polypeptide reads, in one-letter code: Ribonuclease 2B (155 aa).

The N-terminal stretch at 1–25 is a signal peptide; sequence MGLKLLESRLCLLLLLGLVLTLVSC. H38 functions as the Proton acceptor in the catalytic mechanism. Intrachain disulfides connect C47-C106, C61-C118, C79-C133, and C86-C94. 62–66 contacts substrate; the sequence is KDLNT. Residue N114 is glycosylated (N-linked (GlcNAc...) asparagine). H150 serves as the catalytic Proton donor.

Belongs to the pancreatic ribonuclease family.

It catalyses the reaction an [RNA] containing cytidine + H2O = an [RNA]-3'-cytidine-3'-phosphate + a 5'-hydroxy-ribonucleotide-3'-[RNA].. The catalysed reaction is an [RNA] containing uridine + H2O = an [RNA]-3'-uridine-3'-phosphate + a 5'-hydroxy-ribonucleotide-3'-[RNA].. This is a non-secretory ribonuclease. It is a pyrimidine specific nuclease with a slight preference for U. Cytotoxin and helminthotoxin. Possesses a wide variety of biological activities. This Mus musculus (Mouse) protein is Ribonuclease 2B.